The following is a 141-amino-acid chain: Hemoglobin subunit alpha-D (141 aa).

One can recognise a Globin domain in the interval 1 to 141; it reads MLTADDKKLI…VAAVLAEKYR (141 aa). Heme b contacts are provided by His58 and His87.

It belongs to the globin family. As to quaternary structure, heterotetramer of two alpha-D chains and two beta chains. Red blood cells.

Functionally, involved in oxygen transport from the lung to the various peripheral tissues. The sequence is that of Hemoglobin subunit alpha-D (HBAD) from Struthio camelus (Common ostrich).